Reading from the N-terminus, the 158-residue chain is uncharacterized protein (158 aa).

4 consecutive transmembrane segments (helical) span residues 12–32, 39–59, 90–110, and 113–133; these read IITL…AVVV, LDIL…SLSV, LIYL…FNTI, and IIST…WLPL.

The protein resides in the cell membrane. This is an uncharacterized protein from Mycoplasma genitalium (strain ATCC 33530 / DSM 19775 / NCTC 10195 / G37) (Mycoplasmoides genitalium).